The primary structure comprises 140 residues: Putative pre-16S rRNA nuclease (140 aa).

This sequence belongs to the YqgF nuclease family.

It is found in the cytoplasm. Its function is as follows. Could be a nuclease involved in processing of the 5'-end of pre-16S rRNA. This is Putative pre-16S rRNA nuclease from Aeromonas hydrophila.